An 872-amino-acid chain; its full sequence is DNA mismatch repair protein MutS (872 aa).

An ATP-binding site is contributed by 632-639 (GPNMGGKS).

It belongs to the DNA mismatch repair MutS family.

Its function is as follows. This protein is involved in the repair of mismatches in DNA. It is possible that it carries out the mismatch recognition step. This protein has a weak ATPase activity. The sequence is that of DNA mismatch repair protein MutS from Colwellia psychrerythraea (strain 34H / ATCC BAA-681) (Vibrio psychroerythus).